The primary structure comprises 328 residues: dITP/XTP pyrophosphatase (328 aa).

The unknown stretch occupies residues 1 to 129; it reads MSEKIYEYKD…ATSEQGFGDT (129 aa). An NTP pyrophosphatase region spans residues 130 to 324; it reads ILIATRNEGK…KLMEVFPAWQ (195 aa). 134–139 lines the substrate pocket; that stretch reads TRNEGK. The active-site Proton acceptor is D196. D196 is a Mg(2+) binding site. Residues S197, 280–283, K303, and 308–309 each bind substrate; these read FGYD and HR.

The protein belongs to the HAM1 NTPase family. In terms of assembly, homodimer. Mg(2+) serves as cofactor.

The catalysed reaction is XTP + H2O = XMP + diphosphate + H(+). It catalyses the reaction dITP + H2O = dIMP + diphosphate + H(+). The enzyme catalyses ITP + H2O = IMP + diphosphate + H(+). Its function is as follows. Pyrophosphatase that catalyzes the hydrolysis of nucleoside triphosphates to their monophosphate derivatives, with a high preference for the non-canonical purine nucleotides XTP (xanthosine triphosphate), dITP (deoxyinosine triphosphate) and ITP. Seems to function as a house-cleaning enzyme that removes non-canonical purine nucleotides from the nucleotide pool, thus preventing their incorporation into DNA/RNA and avoiding chromosomal lesions. The polypeptide is dITP/XTP pyrophosphatase (Streptococcus pyogenes serotype M18 (strain MGAS8232)).